The primary structure comprises 465 residues: Phenylalanine--tRNA ligase alpha subunit (465 aa).

Thr-311 and Phe-389 together coordinate L-phenylalanine. Glu-391 contacts Mg(2+).

It belongs to the class-II aminoacyl-tRNA synthetase family. Phe-tRNA synthetase alpha subunit type 2 subfamily. In terms of assembly, tetramer of two alpha and two beta subunits. Mg(2+) is required as a cofactor.

It localises to the cytoplasm. The catalysed reaction is tRNA(Phe) + L-phenylalanine + ATP = L-phenylalanyl-tRNA(Phe) + AMP + diphosphate + H(+). This Metallosphaera sedula (strain ATCC 51363 / DSM 5348 / JCM 9185 / NBRC 15509 / TH2) protein is Phenylalanine--tRNA ligase alpha subunit.